A 121-amino-acid chain; its full sequence is NAD(P)H-quinone oxidoreductase subunit M (121 aa).

Belongs to the complex I NdhM subunit family. As to quaternary structure, NDH-1 can be composed of about 15 different subunits; different subcomplexes with different compositions have been identified which probably have different functions.

It localises to the cellular thylakoid membrane. It carries out the reaction a plastoquinone + NADH + (n+1) H(+)(in) = a plastoquinol + NAD(+) + n H(+)(out). The catalysed reaction is a plastoquinone + NADPH + (n+1) H(+)(in) = a plastoquinol + NADP(+) + n H(+)(out). Functionally, NDH-1 shuttles electrons from an unknown electron donor, via FMN and iron-sulfur (Fe-S) centers, to quinones in the respiratory and/or the photosynthetic chain. The immediate electron acceptor for the enzyme in this species is believed to be plastoquinone. Couples the redox reaction to proton translocation, and thus conserves the redox energy in a proton gradient. Cyanobacterial NDH-1 also plays a role in inorganic carbon-concentration. This is NAD(P)H-quinone oxidoreductase subunit M from Synechococcus sp. (strain JA-3-3Ab) (Cyanobacteria bacterium Yellowstone A-Prime).